We begin with the raw amino-acid sequence, 611 residues long: ATP-dependent zinc metalloprotease FtsH 1 (611 aa).

At 1–6 the chain is on the cytoplasmic side; sequence MNDNNK. Residues 7 to 27 traverse the membrane as a helical segment; the sequence is IIRSMVLYLLIFIAIYAMVQL. Topologically, residues 28-107 are extracellular; that stretch reads YSQSTEPITD…KSEPQVGPPW (80 aa). The helical transmembrane segment at 108 to 128 threads the bilayer; that stretch reads WVQMLPSLFLIVIFIIFWYIF. Residue 124–131 participates in ATP binding; that stretch reads FWYIFMQQ. The Cytoplasmic portion of the chain corresponds to 129–611; sequence MQQAQGGGGS…GEDIEGVQFA (483 aa). Histidine 423 is a binding site for Zn(2+). Residue glutamate 424 is part of the active site. Zn(2+) contacts are provided by histidine 427 and aspartate 499.

This sequence in the central section; belongs to the AAA ATPase family. In the C-terminal section; belongs to the peptidase M41 family. As to quaternary structure, homohexamer. It depends on Zn(2+) as a cofactor.

It is found in the cell membrane. In terms of biological role, acts as a processive, ATP-dependent zinc metallopeptidase for both cytoplasmic and membrane proteins. Plays a role in the quality control of integral membrane proteins. The polypeptide is ATP-dependent zinc metalloprotease FtsH 1 (Thermoanaerobacter sp. (strain X514)).